The chain runs to 708 residues: ATP-dependent DNA helicase Hel308 (708 aa).

ATP contacts are provided by residues Gln28 and 46–53 (TATASGKS). The region spanning 33-198 (RAGIFDGRSV…WLGARLVESS (166 aa)) is the Helicase ATP-binding domain. The DEAH box signature appears at 143–146 (DEIH). Residues 231-429 (EVALAVDAVA…EPNLRAHVLG (199 aa)) enclose the Helicase C-terminal domain.

This sequence belongs to the helicase family. Hel308 subfamily. Monomer.

The catalysed reaction is Couples ATP hydrolysis with the unwinding of duplex DNA by translocating in the 3'-5' direction.. It catalyses the reaction ATP + H2O = ADP + phosphate + H(+). Its function is as follows. DNA-dependent ATPase and 3'-5' DNA helicase that may be involved in repair of stalled replication forks. This is ATP-dependent DNA helicase Hel308 from Pyrobaculum calidifontis (strain DSM 21063 / JCM 11548 / VA1).